Reading from the N-terminus, the 692-residue chain is MKFTEHLSAHITPEWRKQYIQYEAFKEMLYAAQDQAPSIEVTDEDTVKRYYAKFEEKFFQTCEKELAKINTFYSEKLAEAQRRSATLQNELQSSLDAQRESSVVPGLRQRRKAVFALTHEERVQHRNIKDLKLAFSEFYLSLILLQNYQNLNFTGFRKILKKHDKILETSRGADWRVAHVEVAPFYTCKKINQLISETETVVTNELESGDRQKAMKRLRVPPLGAAQPAPAWTTFRVGLYCGIFMVVNLAVVMAGYHFLQGKNVWPMVRIYRGGFLLIEFLFLLGINTYGWRQAGVNHVLIFELNPRNNLSHQHLFEIAGFLGILWCFSLFSCIFGLSINLQMHLNPLILYGIMLVFLVNPTKTFYYKSRFWLLKLLFRVFTAPFHKVGFADFWLADQLNSLAIILMDLEFMICFYSFELNWGKSEGLVESAKSVCNSYSYGVRAVVQCIPAWLRFIQCLRRYRDTKRAFPHLVNAGKYSTTFFMVTFAALYSTHKERNHSDAQVFFYLWIVFYFISSCYTLIWDLKMDWGLFDRNAGENTFLREEIVYPQKAYYYCAIIQDVILRFAWTIQISVTSLNLFTDAGDVISTVLAPLEVFRRFVWNFFRLENEHLNNCGEFRAVRDISVAPLNADDQTMLEQMMDQDDGVKNRVKSRIWKRSQSMSLRRPRLSSQSKMKDAKILIDDTDDEANT.

The region spanning 1-177 (MKFTEHLSAH…ETSRGADWRV (177 aa)) is the SPX domain. At 1–238 (MKFTEHLSAH…APAWTTFRVG (238 aa)) the chain is on the cytoplasmic side. The tract at residues 158–165 (KILKKHDK) is important for inositol polyphosphate binding. Residues 239 to 259 (LYCGIFMVVNLAVVMAGYHFL) traverse the membrane as a helical segment. At 260-269 (QGKNVWPMVR) the chain is on the extracellular side. The helical transmembrane segment at 270–290 (IYRGGFLLIEFLFLLGINTYG) threads the bilayer. The Cytoplasmic portion of the chain corresponds to 291-314 (WRQAGVNHVLIFELNPRNNLSHQH). Residues 315 to 335 (LFEIAGFLGILWCFSLFSCIF) traverse the membrane as a helical segment. Residues 336–338 (GLS) lie on the Extracellular side of the membrane. Residues 339 to 359 (INLQMHLNPLILYGIMLVFLV) traverse the membrane as a helical segment. At 360-375 (NPTKTFYYKSRFWLLK) the chain is on the cytoplasmic side. A helical transmembrane segment spans residues 376–396 (LLFRVFTAPFHKVGFADFWLA). Over 397-401 (DQLNS) the chain is Extracellular. A helical transmembrane segment spans residues 402–422 (LAIILMDLEFMICFYSFELNW). The Cytoplasmic portion of the chain corresponds to 423-468 (GKSEGLVESAKSVCNSYSYGVRAVVQCIPAWLRFIQCLRRYRDTKR). The EXS domain maps to 435-639 (VCNSYSYGVR…LNADDQTMLE (205 aa)). A helical transmembrane segment spans residues 469–491 (AFPHLVNAGKYSTTFFMVTFAAL). At 492–503 (YSTHKERNHSDA) the chain is on the extracellular side. Residues 504–524 (QVFFYLWIVFYFISSCYTLIW) traverse the membrane as a helical segment. Topologically, residues 525–692 (DLKMDWGLFD…IDDTDDEANT (168 aa)) are cytoplasmic. Residues 660–674 (SQSMSLRRPRLSSQS) are compositionally biased toward polar residues. The segment at 660–692 (SQSMSLRRPRLSSQSKMKDAKILIDDTDDEANT) is disordered.

It belongs to the SYG1 (TC 2.A.94) family.

The protein resides in the cell membrane. In terms of biological role, plays a role in phosphate homeostasis. Mediates phosphate export from the cell. Binds inositol hexakisphosphate (Ins6P) and similar inositol polyphosphates, such as 5-diphospho-inositol pentakisphosphate (5-InsP7); these are important intracellular signaling molecules. This Xenopus laevis (African clawed frog) protein is Xenotropic and polytropic retrovirus receptor 1 homolog (xpr1).